The primary structure comprises 337 residues: Eukaryotic translation initiation factor 3 subunit H (337 aa).

Residues 21 to 153 form the MPN domain; that stretch reads VQCDGLAVMK…LKAYRLTPQA (133 aa).

It belongs to the eIF-3 subunit H family. Component of the eukaryotic translation initiation factor 3 (eIF-3) complex. The eIF-3 complex interacts with pix. Interacts with mxt.

The protein resides in the cytoplasm. Its function is as follows. Component of the eukaryotic translation initiation factor 3 (eIF-3) complex, which is involved in protein synthesis of a specialized repertoire of mRNAs and, together with other initiation factors, stimulates binding of mRNA and methionyl-tRNAi to the 40S ribosome. The eIF-3 complex specifically targets and initiates translation of a subset of mRNAs involved in cell proliferation. This is Eukaryotic translation initiation factor 3 subunit H from Drosophila pseudoobscura pseudoobscura (Fruit fly).